Consider the following 123-residue polypeptide: PTS system glucitol/sorbitol-specific EIIA component (123 aa).

The PTS EIIA type-5 domain maps to 3 to 116 (VIYQTTITRI…PDDIAPGSVL (114 aa)). Residue His-43 is the Tele-phosphohistidine intermediate of the active site. His-43 is modified (phosphohistidine; by HPr).

The protein localises to the cytoplasm. Its function is as follows. The phosphoenolpyruvate-dependent sugar phosphotransferase system (sugar PTS), a major carbohydrate active transport system, catalyzes the phosphorylation of incoming sugar substrates concomitantly with their translocation across the cell membrane. The enzyme II complex composed of SrlA, SrlB and SrlE is involved in glucitol/sorbitol transport. It can also use D-mannitol. This is PTS system glucitol/sorbitol-specific EIIA component (srlB) from Escherichia coli (strain K12).